The chain runs to 930 residues: Endoplasmic reticulum aminopeptidase 1 (930 aa).

The Cytoplasmic segment spans residues 1-2 (MP). Residues 3–23 (SLLPLVLTFLSVSSPSWCQNS) form a helical; Signal-anchor for type II membrane protein membrane-spanning segment. Residues 24 to 930 (DIESLKASNG…WLQKEKPELL (907 aa)) lie on the Lumenal side of the membrane. N-linked (GlcNAc...) asparagine glycans are attached at residues asparagine 59 and asparagine 143. Substrate is bound by residues glutamate 172 and 306–310 (GAMEN). Histidine 342 contributes to the Zn(2+) binding site. Glutamate 343 is an active-site residue. Zn(2+) contacts are provided by histidine 346 and glutamate 365. Cysteine 393 and cysteine 432 are oxidised to a cystine. N-linked (GlcNAc...) asparagine glycosylation is found at asparagine 403 and asparagine 655. Cysteine 725 and cysteine 732 are disulfide-bonded. Residues asparagine 749 and asparagine 890 are each glycosylated (N-linked (GlcNAc...) asparagine).

Belongs to the peptidase M1 family. In terms of assembly, monomer. May also exist as a heterodimer; with ERAP2. Interacts with RBMX. The cofactor is Zn(2+). In terms of processing, N-glycosylated.

Its subcellular location is the endoplasmic reticulum membrane. In terms of biological role, aminopeptidase that plays a central role in peptide trimming, a step required for the generation of most HLA class I-binding peptides. Peptide trimming is essential to customize longer precursor peptides to fit them to the correct length required for presentation on MHC class I molecules. Strongly prefers substrates 9-16 residues long. Rapidly degrades 13-mer to a 9-mer and then stops. Preferentially hydrolyzes the residue Leu and peptides with a hydrophobic C-terminus, while it has weak activity toward peptides with charged C-terminus. May play a role in the inactivation of peptide hormones. May be involved in the regulation of blood pressure through the inactivation of angiotensin II and/or the generation of bradykinin in the kidney. In Mus musculus (Mouse), this protein is Endoplasmic reticulum aminopeptidase 1 (Erap1).